The chain runs to 1307 residues: Rho1 guanine nucleotide exchange factor TUS1 (1307 aa).

Over residues 1-10 (MYRYNRSSPF) the composition is skewed to polar residues. Disordered stretches follow at residues 1–144 (MYRY…FIGN), 164–194 (PFAN…SDLR), and 219–239 (EDSE…NVSG). Positions 12-29 (RTPEKRVSRQESQRKSIE) are enriched in basic and acidic residues. A compositionally biased stretch (polar residues) spans 37 to 79 (NTRNSFLDDSDNGTDNISIGWTPISDTQQFQSPVPQAFTFTSK). Residues 87-97 (TSSSESTPKST) are compositionally biased toward low complexity. Residues 176 to 194 (SPRDSSKQQAHFSDESDLR) are compositionally biased toward basic and acidic residues. Residues 467-657 (QRQSFIFDLI…EKLNFEVNQV (191 aa)) enclose the DH domain. Residues 715–877 (KLVLSGTVYK…WIDAIMESFK (163 aa)) enclose the PH domain. The disordered stretch occupies residues 780 to 802 (TSKQPLRNYSQKEHKSPMHNFST). One can recognise a CNH domain in the interval 938 to 1279 (TTRILCCEDV…KLASSERREK (342 aa)).

Interacts with RHO1.

In terms of biological role, guanine nucleotide-exchange factor (GEF) for RHO1 that stimulates the exchange of RHO1 GDP-bound form into GTP-bound form. Required for signaling of cell wall defects to RHO1. This Saccharomyces cerevisiae (strain ATCC 204508 / S288c) (Baker's yeast) protein is Rho1 guanine nucleotide exchange factor TUS1 (TUS1).